The chain runs to 113 residues: Putative pterin-4-alpha-carbinolamine dehydratase (113 aa).

The protein belongs to the pterin-4-alpha-carbinolamine dehydratase family.

The enzyme catalyses (4aS,6R)-4a-hydroxy-L-erythro-5,6,7,8-tetrahydrobiopterin = (6R)-L-erythro-6,7-dihydrobiopterin + H2O. This chain is Putative pterin-4-alpha-carbinolamine dehydratase, found in Nitrosospira multiformis (strain ATCC 25196 / NCIMB 11849 / C 71).